A 97-amino-acid polypeptide reads, in one-letter code: Late embryogenesis abundant protein Lea5 (97 aa).

Belongs to the LEA type 3 family.

The chain is Late embryogenesis abundant protein Lea5 (LEA5) from Citrus sinensis (Sweet orange).